Here is a 356-residue protein sequence, read N- to C-terminus: Glutamine synthetase cytosolic isozyme 2 (356 aa).

The GS beta-grasp domain occupies 19 to 99 (IIAEYIWIGG…VMCDTYTPAG (81 aa)). A GS catalytic domain is found at 106–356 (KRHNAAKIFS…IAESTILWKP (251 aa)).

This sequence belongs to the glutamine synthetase family. Homooctamer.

It localises to the cytoplasm. The enzyme catalyses L-glutamate + NH4(+) + ATP = L-glutamine + ADP + phosphate + H(+). The sequence is that of Glutamine synthetase cytosolic isozyme 2 (GS1-2) from Vitis vinifera (Grape).